Consider the following 159-residue polypeptide: Transcription elongation factor GreA (159 aa).

The stretch at 47–73 (AEYDAAREEQSLTEAHIADLENKLSTA) forms a coiled coil.

It belongs to the GreA/GreB family.

In terms of biological role, necessary for efficient RNA polymerase transcription elongation past template-encoded arresting sites. The arresting sites in DNA have the property of trapping a certain fraction of elongating RNA polymerases that pass through, resulting in locked ternary complexes. Cleavage of the nascent transcript by cleavage factors such as GreA or GreB allows the resumption of elongation from the new 3'terminus. GreA releases sequences of 2 to 3 nucleotides. The polypeptide is Transcription elongation factor GreA (Chlorobium phaeobacteroides (strain DSM 266 / SMG 266 / 2430)).